Reading from the N-terminus, the 75-residue chain is MQVVVRDNNVDQALRVLKKKMQREGIFREMKARRSYEKPSERRAREKAEAVRRARKLARKQAQREGLLPGKKRAA.

Basic and acidic residues predominate over residues 33–52 (RRSYEKPSERRAREKAEAVR). The segment at 33 to 75 (RRSYEKPSERRAREKAEAVRRARKLARKQAQREGLLPGKKRAA) is disordered.

Belongs to the bacterial ribosomal protein bS21 family.

The protein is Small ribosomal subunit protein bS21B of Chelativorans sp. (strain BNC1).